We begin with the raw amino-acid sequence, 887 residues long: MKRQSERDSSPSGRGSSSSAKRPREREREAEAGGRRAAHKASGGTKHPVPARARDKPRGSGGGGGHRDGRAAGDANHRASGGRSSGAPGGGGRTGKASGDPGAGGASPRASPLPPPPPPPGAEPAGPGSTAAPEYKTLLISSLSPALPAEHLEDRLFHQFKRFGEISLRLSHTPELGRVAYVNFRHPQDAREARQHALARQLLLYDRPLKVEPVYLRGGGSSRRSSSSSAAASTPPPGPPAPADPLGYLPLHGGYQYKQRSLSPVAAPPLREPRARHAAAAFALDAAAAAAVGLSRERALDYYGLYDDRGRPYGYQAVCEEDLMPEDDQRATRNLFIGNLDHSVSEVELRRAFEKYGIIEEVVIKRPARGQGGAYAFLKFQNLDMAHRAKVAMSGRVIGRNPIKIGYGKANPTTRLWVGGLGPNTSLAALAREFDRFGSIRTIDHVKGDSFAYIQYESLDAAQAACAKMRGFPLGGPDRRLRVDFAKAEETRYPQQYQPSPLPVHYELLTDGYTRHRNLDADLRVRDRTPPHLLYSDRDRTFLEGDWTSLSKSSDRRNSLEGYSRSVRSRSGERWGGDGDRSIAKPWEERRKRRSLSSDRGRTTHSPYEERSRTKGGGQQSERGSDRTPERSRKENHSSEGTKESGSNSLSNSRHGAEERSHHHHHHEAPDSSHGKKTRESERNHRTTEAEPKTLEEPKHETKKLKTLSEYAQTLQLGWNGLLVLKNSCFPTSMHILEGDQGVISGLLKDHPSGSKLTQLKIAQRLRLDQPKLDEVTRRIKQGSPNGYAVLLAIQSTPSGPGAEGMPVVEPGLQRRLLRNLVSYLKQKQAAGVISLPVGGSKGRDNTGMLYAFPPCDFSQQYLQSALRTLGKLEEEHMVIVIVRDTA.

The tract at residues 1–132 (MKRQSERDSS…EPAGPGSTAA (132 aa)) is disordered. A compositionally biased stretch (low complexity) spans 10–20 (SPSGRGSSSSA). Composition is skewed to basic and acidic residues over residues 22–34 (RPRE…EAGG) and 65–77 (GHRD…DANH). Residues 83–94 (RSSGAPGGGGRT) show a composition bias toward gly residues. Low complexity predominate over residues 95–110 (GKASGDPGAGGASPRA). Phosphoserine is present on residues Ser107 and Ser111. Residues 111-122 (SPLPPPPPPPGA) show a composition bias toward pro residues. A compositionally biased stretch (low complexity) spans 123–132 (EPAGPGSTAA). Residues 136-216 (KTLLISSLSP…RPLKVEPVYL (81 aa)) form the RRM 1 domain. Lys210 is covalently cross-linked (Glycyl lysine isopeptide (Lys-Gly) (interchain with G-Cter in SUMO2)). Residues 215–249 (YLRGGGSSRRSSSSSAAASTPPPGPPAPADPLGYL) form a disordered region. Low complexity predominate over residues 222–233 (SRRSSSSSAAAS). A compositionally biased stretch (pro residues) spans 234–243 (TPPPGPPAPA). 2 positions are modified to phosphoserine: Ser261 and Ser263. 2 consecutive RRM domains span residues 333 to 410 (RNLF…YGKA) and 414 to 488 (TRLW…FAKA). A Phosphothreonine modification is found at Thr529. Phosphoserine is present on residues Ser549, Ser553, and Ser559. The segment at 549-703 (SLSKSSDRRN…TLEEPKHETK (155 aa)) is disordered. Composition is skewed to basic and acidic residues over residues 570–613 (RSGE…ERSR), 623–643 (RGSD…EGTK), and 668–700 (EAPD…EPKH). A Nuclear localization signal motif is present at residues 590-594 (RRKRR). Lys699 is covalently cross-linked (Glycyl lysine isopeptide (Lys-Gly) (interchain with G-Cter in SUMO2)). An SPOC domain is found at 708 to 886 (LSEYAQTLQL…HMVIVIVRDT (179 aa)). Residues 719-887 (WNGLLVLKNS…MVIVIVRDTA (169 aa)) are interaction with Epstein-Barr virus BMLF1.

It belongs to the RRM Spen family. In terms of assembly, component of the WMM complex, a N6-methyltransferase complex composed of a catalytic subcomplex, named MAC, and of an associated subcomplex, named MACOM. The MAC subcomplex is composed of METTL3 and METTL14. The MACOM subcomplex is composed of WTAP, ZC3H13, CBLL1/HAKAI, VIRMA, and, in some cases of RBM15 (RBM15 or RBM15B). May interact with NCOR2. Interacts with NXF1, the interaction is required to promote mRNA export.

Its subcellular location is the nucleus. It localises to the nucleoplasm. It is found in the nucleus speckle. The protein resides in the nucleus envelope. Its function is as follows. RNA-binding protein that acts as a key regulator of N6-methyladenosine (m6A) methylation of RNAs, thereby regulating different processes, such as alternative splicing of mRNAs and X chromosome inactivation mediated by Xist RNA. Associated component of the WMM complex, a complex that mediates N6-methyladenosine (m6A) methylation of RNAs, a modification that plays a role in the efficiency of mRNA splicing and RNA processing. Plays a key role in m6A methylation, possibly by binding target RNAs and recruiting the WMM complex. Involved in random X inactivation mediated by Xist RNA: acts by binding Xist RNA and recruiting the WMM complex, which mediates m6A methylation, leading to target YTHDC1 reader on Xist RNA and promoting transcription repression activity of Xist. Functions in the regulation of alternative or illicit splicing, possibly by regulating m6A methylation. Inhibits pre-mRNA splicing. Also functions as a mRNA export factor by acting as a cofactor for the nuclear export receptor NXF1. This chain is Putative RNA-binding protein 15B (Rbm15b), found in Mus musculus (Mouse).